The chain runs to 429 residues: MSFNIIILKELGFSLVFSQSKCEYIIFQKEQCGLNDIYFGFIPRQSIYPTLNAAFVTLDSERNQGFIPFTLLIKKSNQQFVIPNSVFLIQVIKEPTINKPATLTSHIFLNSFNLNLQFSGIDCKYLNLYPNIKFLHICLITLLIPSGLDINFDHSMKDILYLDLIGQSKILYYSFSNLFTKLLRIKKMPQFIFRNSNFFLPILNKLSLSSINDFFVSSYQRAVYLRHFLITHYFTIKQTDYRILFYPTAYKSMQLYYLDMLFYRSLKPIVYTLYGIFIVICKTEALISIDVNSGSHSSRVSQNLSLHTNLIASKSIIKEIKLRNLAGVIVIDFVDMIHQKDQIHLLAFFRYLLNINSVMITLIQLSDIGLLELTRKRQDQSIYDVFQIGNISKSSFLYDRILSLNKNLFKTNLLINYTLFSNVKLIYNY.

The Mg(2+) site is built by D290 and D332.

Belongs to the RNase E/G family. The cofactor is Mg(2+).

It is found in the plastid. It localises to the chloroplast stroma. Functionally, involved in intercistronic processing of primary transcripts from chloroplast operons. The endonucleolytic activity of the enzyme depends on the number of phosphates at the 5' end, is inhibited by structured RNA, and preferentially cleaves A/U-rich sequences. The polypeptide is Ribonuclease E/G-like protein (rne) (Guillardia theta (Cryptophyte)).